Consider the following 273-residue polypeptide: Nickel permease LarQ (273 aa).

5 consecutive transmembrane segments (helical) span residues 64–84 (LIQL…ILLW), 117–137 (MLFV…FFGL), 159–179 (LAGL…AIAI), 210–230 (LIGA…LELY), and 251–271 (HWRD…FIFW).

This sequence belongs to the CbiQ family. In terms of assembly, may form an energy-coupling factor (ECF) transporter complex composed of an ATP-binding protein (A component, LarO), a transmembrane protein (T component, LarQ) and a fused possible substrate-capture protein (S component, LarMN) of unknown stoichiometry.

The protein resides in the cell membrane. Probable transmembrane component of the energy-coupling factor (ECF) transporter complex LarMNQO involved in nickel import. This Lactiplantibacillus plantarum (strain ATCC BAA-793 / NCIMB 8826 / WCFS1) (Lactobacillus plantarum) protein is Nickel permease LarQ.